The sequence spans 529 residues: All-trans-zeta-carotene desaturase (529 aa).

12-45 (IVVGAGPGGLSAAINLAGQGFRVTVVEKDAVPGG) provides a ligand contact to FAD.

The protein belongs to the carotenoid/retinoid oxidoreductase family. Requires FAD as cofactor.

It carries out the reaction all-trans-zeta-carotene + 2 A = all-trans-lycopene + 2 AH2. Its pathway is carotenoid biosynthesis; lycopene biosynthesis. Dehydrogenates carotenes in the trans conformation: converts all-trans-zeta-carotene into all-trans-lycopene, one of the last dehydrogenation steps of lycopene biosynthesis. The sequence is that of All-trans-zeta-carotene desaturase (carC) from Myxococcus xanthus.